A 453-amino-acid chain; its full sequence is Ribosomal protein uS12 methylthiotransferase RimO (453 aa).

One can recognise an MTTase N-terminal domain in the interval 9–124 (PKIGFVSLGC…VMDAVHKHMP (116 aa)). [4Fe-4S] cluster-binding residues include cysteine 18, cysteine 54, cysteine 83, cysteine 155, cysteine 159, and cysteine 162. The Radical SAM core domain occupies 141–382 (LTPKHFAYLK…MLLQEEISKK (242 aa)). A TRAM domain is found at 385 to 453 (QAKVGKTMRV…ADAHDLWAEA (69 aa)).

It belongs to the methylthiotransferase family. RimO subfamily. [4Fe-4S] cluster serves as cofactor.

It localises to the cytoplasm. The catalysed reaction is L-aspartate(89)-[ribosomal protein uS12]-hydrogen + (sulfur carrier)-SH + AH2 + 2 S-adenosyl-L-methionine = 3-methylsulfanyl-L-aspartate(89)-[ribosomal protein uS12]-hydrogen + (sulfur carrier)-H + 5'-deoxyadenosine + L-methionine + A + S-adenosyl-L-homocysteine + 2 H(+). Its function is as follows. Catalyzes the methylthiolation of an aspartic acid residue of ribosomal protein uS12. In Janthinobacterium sp. (strain Marseille) (Minibacterium massiliensis), this protein is Ribosomal protein uS12 methylthiotransferase RimO.